Here is a 314-residue protein sequence, read N- to C-terminus: 3'-5' exoribonuclease YhaM (314 aa).

Residues 163–279 (HVVSMLHLAK…LHYIDNLDAK (117 aa)) form the HD domain.

It belongs to the YhaM family.

Functionally, shows a 3'-5' exoribonuclease activity. This is 3'-5' exoribonuclease YhaM from Bacillus pumilus (strain SAFR-032).